The sequence spans 424 residues: MKIVTINDSVSLKRDLDTGTDMQQNAVHSIIAQVREQGDQALFTLTKQFDGADLTTLRVQQAEIEAAYREMEEPVLQAIGEAIENIRDFHERQKRNSWMTTKSDGTILGQKITPLDSVGLYVPGGKAAYPSSIMMNVIPAQVAGVQNIVIVSPPQKDGSIPAGVLVTAAELGVKTILKVGGAQAIAALAYGTESVPAVDKITGPGNIYVALAKRAVFGHVDIDMIAGPSEIVVLADERANPRYIAADLLSQAEHDERASAILVTPSRALAEEVAVEVDQQLTTLPKREIAAASIRDYGAIYVTETLEEAVSVVNELAPEHLEILAEEPMSFLGKIRHAGAIFLGPYSSEPVGDYFAGPNHVLPTNGTARFSSPLNVDDFVKKSSIISYSKAALLENGAKISALARLEGLEAHARAIDIRLEDER.

NAD(+)-binding residues include Tyr-121, Gln-183, and Asn-206. 3 residues coordinate substrate: Ser-229, Gln-251, and His-254. 2 residues coordinate Zn(2+): Gln-251 and His-254. Residues Glu-319 and His-320 each act as proton acceptor in the active site. Substrate-binding residues include His-320, Asp-353, Glu-407, and His-412. Asp-353 is a Zn(2+) binding site. His-412 contacts Zn(2+).

It belongs to the histidinol dehydrogenase family. The cofactor is Zn(2+).

The catalysed reaction is L-histidinol + 2 NAD(+) + H2O = L-histidine + 2 NADH + 3 H(+). It functions in the pathway amino-acid biosynthesis; L-histidine biosynthesis; L-histidine from 5-phospho-alpha-D-ribose 1-diphosphate: step 9/9. Catalyzes the sequential NAD-dependent oxidations of L-histidinol to L-histidinaldehyde and then to L-histidine. This Halalkalibacterium halodurans (strain ATCC BAA-125 / DSM 18197 / FERM 7344 / JCM 9153 / C-125) (Bacillus halodurans) protein is Histidinol dehydrogenase.